Here is a 314-residue protein sequence, read N- to C-terminus: 4-hydroxy-3-methylbut-2-enyl diphosphate reductase (314 aa).

[4Fe-4S] cluster is bound at residue Cys12. Positions 41 and 74 each coordinate (2E)-4-hydroxy-3-methylbut-2-enyl diphosphate. Dimethylallyl diphosphate-binding residues include His41 and His74. Isopentenyl diphosphate is bound by residues His41 and His74. Cys96 is a binding site for [4Fe-4S] cluster. A (2E)-4-hydroxy-3-methylbut-2-enyl diphosphate-binding site is contributed by His124. His124 contributes to the dimethylallyl diphosphate binding site. His124 serves as a coordination point for isopentenyl diphosphate. Glu126 (proton donor) is an active-site residue. Thr167 serves as a coordination point for (2E)-4-hydroxy-3-methylbut-2-enyl diphosphate. Cys197 is a binding site for [4Fe-4S] cluster. (2E)-4-hydroxy-3-methylbut-2-enyl diphosphate is bound by residues Ser225, Ser226, Asn227, and Ser269. Positions 225, 226, 227, and 269 each coordinate dimethylallyl diphosphate. The isopentenyl diphosphate site is built by Ser225, Ser226, Asn227, and Ser269.

This sequence belongs to the IspH family. The cofactor is [4Fe-4S] cluster.

It carries out the reaction isopentenyl diphosphate + 2 oxidized [2Fe-2S]-[ferredoxin] + H2O = (2E)-4-hydroxy-3-methylbut-2-enyl diphosphate + 2 reduced [2Fe-2S]-[ferredoxin] + 2 H(+). It catalyses the reaction dimethylallyl diphosphate + 2 oxidized [2Fe-2S]-[ferredoxin] + H2O = (2E)-4-hydroxy-3-methylbut-2-enyl diphosphate + 2 reduced [2Fe-2S]-[ferredoxin] + 2 H(+). It functions in the pathway isoprenoid biosynthesis; dimethylallyl diphosphate biosynthesis; dimethylallyl diphosphate from (2E)-4-hydroxy-3-methylbutenyl diphosphate: step 1/1. The protein operates within isoprenoid biosynthesis; isopentenyl diphosphate biosynthesis via DXP pathway; isopentenyl diphosphate from 1-deoxy-D-xylulose 5-phosphate: step 6/6. Its function is as follows. Catalyzes the conversion of 1-hydroxy-2-methyl-2-(E)-butenyl 4-diphosphate (HMBPP) into a mixture of isopentenyl diphosphate (IPP) and dimethylallyl diphosphate (DMAPP). Acts in the terminal step of the DOXP/MEP pathway for isoprenoid precursor biosynthesis. The protein is 4-hydroxy-3-methylbut-2-enyl diphosphate reductase of Mannheimia succiniciproducens (strain KCTC 0769BP / MBEL55E).